The sequence spans 149 residues: MAKKITGYVKLQVPAGSANPAPPIGPALGQRGLNIMEFCKAFNAQTAQLEKGMPIPVVITAYQDRSFTFELKTPPVSYFLKKAAGLDTKKKPGSGSKTPGKGATVGKVTRAQLAEIAEKKMKDLNCDNVASAVQMLEGSARSMGLQVEG.

This sequence belongs to the universal ribosomal protein uL11 family. As to quaternary structure, part of the ribosomal stalk of the 50S ribosomal subunit. Interacts with L10 and the large rRNA to form the base of the stalk. L10 forms an elongated spine to which L12 dimers bind in a sequential fashion forming a multimeric L10(L12)X complex. One or more lysine residues are methylated.

Its function is as follows. Forms part of the ribosomal stalk which helps the ribosome interact with GTP-bound translation factors. This Azorhizobium caulinodans (strain ATCC 43989 / DSM 5975 / JCM 20966 / LMG 6465 / NBRC 14845 / NCIMB 13405 / ORS 571) protein is Large ribosomal subunit protein uL11.